Consider the following 174-residue polypeptide: Adipose-secreted signaling protein (174 aa).

A2 is subject to N-acetylalanine. Phosphothreonine is present on T147.

This sequence belongs to the ADISSP family.

The protein localises to the secreted. Adipocyte-secreted protein (adipokine) that acts as a key regulator for white adipose tissue (WAT) thermogenesis and glucose homeostasis at least in part through activation of protein kinase A (PKA). This is Adipose-secreted signaling protein from Rattus norvegicus (Rat).